The following is a 273-amino-acid chain: Acetyl-coenzyme A carboxylase carboxyl transferase subunit alpha (273 aa).

Positions 1-244 (MKKATQSKAW…KVVLKQALDE (244 aa)) constitute a CoA carboxyltransferase C-terminal domain.

Belongs to the AccA family. Acetyl-CoA carboxylase is a heterohexamer composed of biotin carboxyl carrier protein (AccB), biotin carboxylase (AccC) and two subunits each of ACCase subunit alpha (AccA) and ACCase subunit beta (AccD).

It is found in the cytoplasm. The enzyme catalyses N(6)-carboxybiotinyl-L-lysyl-[protein] + acetyl-CoA = N(6)-biotinyl-L-lysyl-[protein] + malonyl-CoA. The protein operates within lipid metabolism; malonyl-CoA biosynthesis; malonyl-CoA from acetyl-CoA: step 1/1. Functionally, component of the acetyl coenzyme A carboxylase (ACC) complex. First, biotin carboxylase catalyzes the carboxylation of biotin on its carrier protein (BCCP) and then the CO(2) group is transferred by the carboxyltransferase to acetyl-CoA to form malonyl-CoA. The polypeptide is Acetyl-coenzyme A carboxylase carboxyl transferase subunit alpha (Acinetobacter baumannii (strain ACICU)).